A 189-amino-acid chain; its full sequence is Keratin-associated protein 5-2 (189 aa).

8 tandem repeats follow at residues 21–24 (CCKP), 27–30 (CCKP), 33–36 (CCVP), 134–137 (CCKP), 144–147 (CCKP), 159–162 (CCKP), 169–172 (CCKP), and 179–182 (CCAP). Positions 27–182 (CCKPVCCCVP…CCCQSSCCAP (156 aa)) are 8 X 4 AA repeats of C-C-X-P.

Belongs to the KRTAP type 5 family. As to quaternary structure, interacts with hair keratins.

In the hair cortex, hair keratin intermediate filaments are embedded in an interfilamentous matrix, consisting of hair keratin-associated protein (KRTAP), which are essential for the formation of a rigid and resistant hair shaft through their extensive disulfide bond cross-linking with abundant cysteine residues of hair keratins. The matrix proteins include the high-sulfur and high-glycine-tyrosine keratins. The chain is Keratin-associated protein 5-2 from Mus musculus (Mouse).